Consider the following 315-residue polypeptide: Ribosomal RNA small subunit methyltransferase H (315 aa).

Residues Ala35 to His37, Asp55, Phe84, Asp105, and Gln112 contribute to the S-adenosyl-L-methionine site.

The protein belongs to the methyltransferase superfamily. RsmH family.

The protein localises to the cytoplasm. The catalysed reaction is cytidine(1402) in 16S rRNA + S-adenosyl-L-methionine = N(4)-methylcytidine(1402) in 16S rRNA + S-adenosyl-L-homocysteine + H(+). Its function is as follows. Specifically methylates the N4 position of cytidine in position 1402 (C1402) of 16S rRNA. The polypeptide is Ribosomal RNA small subunit methyltransferase H (Streptococcus agalactiae serotype Ia (strain ATCC 27591 / A909 / CDC SS700)).